A 351-amino-acid chain; its full sequence is Peptide chain release factor 1 (351 aa).

Glutamine 229 carries the N5-methylglutamine modification. The disordered stretch occupies residues 279–300 (ADAERAADRKSQVGSGDRSERI).

The protein belongs to the prokaryotic/mitochondrial release factor family. Post-translationally, methylated by PrmC. Methylation increases the termination efficiency of RF1.

Its subcellular location is the cytoplasm. In terms of biological role, peptide chain release factor 1 directs the termination of translation in response to the peptide chain termination codons UAG and UAA. The protein is Peptide chain release factor 1 of Paracoccus denitrificans (strain Pd 1222).